Reading from the N-terminus, the 517-residue chain is MDIVGGQHLRQMWDDLAGIYEDKTALIFESCAGEVQHFSYASLNREINRTANLFYSLGIRKGDNVALHLDNCPEFIFCWFGLAKIGAIVVPINARLLREESAWILQNSRTSLLVTSAPFYPMYRQIQQEGRTPLSHICLIGPTLPAEEGVSHFYTLKAQQPDVLLYTPPLTPDDTAEILFTSGTTSRPKGVVITHYNLRFAGYYSSWQCALREDDVYLTVMPAFHIDCQCTAAMAAFSVGATFVLIEKYSARAFWGQVRKYCATVTECIPMMIRTLMTQTPAADDRHHCLREVMFYLNLSVQEKEAFTERFGVRLFTSYGMTETIVGIIGDRPGDKRRWPSIGRPGFCYEAEIRNEQNRALPPGEIGEICIKGIPGKTLFKSYFERPDATAKALEPNGWLHTGDSGYRDEEGFFYFVDRRCNMVKRGGENVSCVELENIIAGHPKIQDVVVIGIKDDIRDEAIKAFVVLNEGETLTEEDFFTFCEENMAKFKVPSYLEIREDLPRNCSGKIIKKNLK.

Belongs to the ATP-dependent AMP-binding enzyme family.

The enzyme catalyses 4-(trimethylamino)butanoate + ATP + CoA = 4-(trimethylamino)butanoyl-CoA + AMP + diphosphate. It carries out the reaction crotonobetaine + ATP + CoA = crotonobetainyl-CoA + AMP + diphosphate. It catalyses the reaction (R)-carnitine + ATP + CoA = (R)-carnitinyl-CoA + AMP + diphosphate. Its pathway is amine and polyamine metabolism; carnitine metabolism. Catalyzes the transfer of CoA to carnitine, generating the initial carnitinyl-CoA needed for the CaiB reaction cycle. Also has activity toward crotonobetaine and gamma-butyrobetaine. The sequence is that of Crotonobetaine/carnitine--CoA ligase from Salmonella arizonae (strain ATCC BAA-731 / CDC346-86 / RSK2980).